The sequence spans 119 residues: Bombesin (119 aa).

Residues M1–C29 form the signal peptide. A propeptide spanning residues M30 to L44 is cleaved from the precursor. The residue at position 58 (M58) is a Methionine amide. The propeptide occupies S62–N119.

The protein belongs to the bombesin/neuromedin-B/ranatensin family. Localized to the cutaneous granular glands in the skin and the brain.

Its subcellular location is the secreted. Its function is as follows. Stimulates smooth muscle contraction. Role in induction of hypothermia, stimulation of DNA replication and release of many gastrointestinal hormones. The protein is Bombesin of Bombina orientalis (Oriental fire-bellied toad).